The following is a 480-amino-acid chain: Citrate synthase 1, peroxisomal (480 aa).

Residues His-321, His-360, and Asp-416 contribute to the active site.

It belongs to the citrate synthase family. In terms of tissue distribution, expressed only in siliques. Not expressed in flower, stem, cauline leaf, young leaf, mature leaf and senescent leaf.

It localises to the peroxisome. The enzyme catalyses oxaloacetate + acetyl-CoA + H2O = citrate + CoA + H(+). The protein operates within carbohydrate metabolism; tricarboxylic acid cycle; isocitrate from oxaloacetate: step 1/2. In Arabidopsis thaliana (Mouse-ear cress), this protein is Citrate synthase 1, peroxisomal (CSY1).